Reading from the N-terminus, the 364-residue chain is Aminomethyltransferase (364 aa).

It belongs to the GcvT family. As to quaternary structure, the glycine cleavage system is composed of four proteins: P, T, L and H.

The enzyme catalyses N(6)-[(R)-S(8)-aminomethyldihydrolipoyl]-L-lysyl-[protein] + (6S)-5,6,7,8-tetrahydrofolate = N(6)-[(R)-dihydrolipoyl]-L-lysyl-[protein] + (6R)-5,10-methylene-5,6,7,8-tetrahydrofolate + NH4(+). Its function is as follows. The glycine cleavage system catalyzes the degradation of glycine. The sequence is that of Aminomethyltransferase from Salmonella paratyphi B (strain ATCC BAA-1250 / SPB7).